The following is a 266-amino-acid chain: MTLLQAIILGIVQGLTEFLPVSSSGHLVLASYYLGWWEKLPLYVDIATNTGTFFAVLVVLRKDVWQALSGFFAGLTSSTARQQEGWRMALLVVLGSIPTAMIGLGLKPIFEELNQPLYVSFALIVTGLVLWFTPKSGLKRNAMSLSWLDATIGGIAQGCAVIPGISRSGSTISTMLWRGATSDLAPRFSFLMYLVVSFGVAILGIDEVREEGLQLAPLLGMIIASFVTGYIALLWLFSVLKKGQFKWFAPYLWVVAAITLIKVAMG.

Helical transmembrane passes span 1–21 (MTLL…FLPV), 40–60 (LPLY…LVVL), 90–110 (LLVV…KPIF), 113–133 (LNQP…LWFT), 145–165 (LSWL…IPGI), 188–208 (FSFL…IDEV), 217–237 (PLLG…LWLF), and 245–265 (FKWF…KVAM).

It belongs to the UppP family.

It localises to the cell inner membrane. The catalysed reaction is di-trans,octa-cis-undecaprenyl diphosphate + H2O = di-trans,octa-cis-undecaprenyl phosphate + phosphate + H(+). Functionally, catalyzes the dephosphorylation of undecaprenyl diphosphate (UPP). Confers resistance to bacitracin. The protein is Undecaprenyl-diphosphatase of Acaryochloris marina (strain MBIC 11017).